A 913-amino-acid polypeptide reads, in one-letter code: DNA mismatch repair protein MutS (913 aa).

The tract at residues 18–50 (NNKQKEKTKIPEDLSLEDLKKESQKRPRQRKNS) is disordered. Basic and acidic residues predominate over residues 19–42 (NKQKEKTKIPEDLSLEDLKKESQK). Residue 720 to 727 (GPNASGKS) coordinates ATP.

The protein belongs to the DNA mismatch repair MutS family.

Functionally, this protein is involved in the repair of mismatches in DNA. It is possible that it carries out the mismatch recognition step. This protein has a weak ATPase activity. In Prochlorococcus marinus (strain MIT 9301), this protein is DNA mismatch repair protein MutS.